We begin with the raw amino-acid sequence, 278 residues long: MADS-box transcription factor PHERES 2 (278 aa).

The 60-residue stretch at 1-60 (MKRKMKLSLIENSVSRKTTFTKRKKGMTKKLTELVTLCGVEACAVVYSPFNSIPEAWPSR) folds into the MADS-box domain.

As to quaternary structure, interacts with AGL61/DIANA and AGL62. Male gametophyte, embryo and endosperm.

It localises to the nucleus. Its function is as follows. Probable transcription factor involved in the development of gametophytes and seeds. The polypeptide is MADS-box transcription factor PHERES 2 (PHE2) (Arabidopsis thaliana (Mouse-ear cress)).